The sequence spans 178 residues: Large ribosomal subunit protein uL6 (178 aa).

Belongs to the universal ribosomal protein uL6 family. Part of the 50S ribosomal subunit.

This protein binds to the 23S rRNA, and is important in its secondary structure. It is located near the subunit interface in the base of the L7/L12 stalk, and near the tRNA binding site of the peptidyltransferase center. This Campylobacter jejuni subsp. doylei (strain ATCC BAA-1458 / RM4099 / 269.97) protein is Large ribosomal subunit protein uL6.